Reading from the N-terminus, the 371-residue chain is tRNA-specific 2-thiouridylase MnmA (371 aa).

Residues 24 to 31 (AMSGGVDS) and leucine 50 each bind ATP. The Nucleophile role is filled by cysteine 120. A disulfide bridge links cysteine 120 with cysteine 216. Glycine 144 contributes to the ATP binding site. The segment at 166 to 168 (KDQ) is interaction with tRNA. Residue cysteine 216 is the Cysteine persulfide intermediate of the active site.

Belongs to the MnmA/TRMU family.

It localises to the cytoplasm. The enzyme catalyses S-sulfanyl-L-cysteinyl-[protein] + uridine(34) in tRNA + AH2 + ATP = 2-thiouridine(34) in tRNA + L-cysteinyl-[protein] + A + AMP + diphosphate + H(+). Catalyzes the 2-thiolation of uridine at the wobble position (U34) of tRNA, leading to the formation of s(2)U34. The polypeptide is tRNA-specific 2-thiouridylase MnmA (Wolbachia sp. subsp. Brugia malayi (strain TRS)).